The sequence spans 648 residues: Probable alpha-galactosidase D (648 aa).

The first 16 residues, 1–16, serve as a signal peptide directing secretion; the sequence is MEFIVSLLLLSPALVA. Residues Asn-84 and Asn-90 are each glycosylated (N-linked (GlcNAc...) asparagine). An intrachain disulfide couples Cys-123 to Cys-156. Asp-154 (nucleophile) is an active-site residue. A substrate-binding site is contributed by 199 to 203; that stretch reads EWGID. Asp-221 serves as the catalytic Proton donor. Residues Asn-339, Asn-350, Asn-505, and Asn-572 are each glycosylated (N-linked (GlcNAc...) asparagine).

Belongs to the glycosyl hydrolase 27 family.

It is found in the secreted. It catalyses the reaction Hydrolysis of terminal, non-reducing alpha-D-galactose residues in alpha-D-galactosides, including galactose oligosaccharides, galactomannans and galactolipids.. Its function is as follows. Hydrolyzes a variety of simple alpha-D-galactoside as well as more complex molecules such as oligosaccharides and polysaccharides. The chain is Probable alpha-galactosidase D (aglD) from Aspergillus fumigatus (strain CBS 144.89 / FGSC A1163 / CEA10) (Neosartorya fumigata).